A 431-amino-acid polypeptide reads, in one-letter code: Trigger factor (431 aa).

In terms of domain architecture, PPIase FKBP-type spans 158-243; it reads GDLVAVETWS…VAEVSEPVVP (86 aa).

It belongs to the FKBP-type PPIase family. Tig subfamily.

The protein localises to the cytoplasm. The enzyme catalyses [protein]-peptidylproline (omega=180) = [protein]-peptidylproline (omega=0). Functionally, involved in protein export. Acts as a chaperone by maintaining the newly synthesized protein in an open conformation. Functions as a peptidyl-prolyl cis-trans isomerase. This chain is Trigger factor, found in Stenotrophomonas maltophilia (strain K279a).